Here is a 171-residue protein sequence, read N- to C-terminus: Disulfide bond formation protein B (171 aa).

Residues 1 to 8 (MRLSYRLV) are Cytoplasmic-facing. The chain crosses the membrane as a helical span at residues 9–25 (SGLLVLASIVGMSFALY). The Periplasmic segment spans residues 26-43 (LEHVKGLEPCPLCIFQRV). Cys-35 and Cys-38 are disulfide-bonded. Residues 44 to 60 (GLMAMGFVALIAFLHNP) form a helical membrane-spanning segment. The Cytoplasmic segment spans residues 61–67 (VSNAIKR). Residues 68-85 (FYAFLAGVAILWSVGVAG) form a helical membrane-spanning segment. The Periplasmic portion of the chain corresponds to 86–142 (RHVWLQHLPPDQVPSCGPGLNYLIDALPMKTVLQEVLSGSGECAAIDWTFLGQSLPV). An intrachain disulfide couples Cys-101 to Cys-128. Residues 143 to 161 (WSLAYFLLLLLVCLWQLFR) traverse the membrane as a helical segment. At 162 to 171 (FYPVFKTAKK) the chain is on the cytoplasmic side.

Belongs to the DsbB family.

It localises to the cell inner membrane. In terms of biological role, required for disulfide bond formation in some periplasmic proteins. Acts by oxidizing the DsbA protein. This chain is Disulfide bond formation protein B, found in Acinetobacter baumannii (strain ATCC 17978 / DSM 105126 / CIP 53.77 / LMG 1025 / NCDC KC755 / 5377).